A 602-amino-acid polypeptide reads, in one-letter code: Aspartate--tRNA(Asp/Asn) ligase (602 aa).

Residue Glu-177 participates in L-aspartate binding. An aspartate region spans residues Gln-201–Lys-204. Arg-223 serves as a coordination point for L-aspartate. Residues Arg-223–Glu-225 and Gln-232 contribute to the ATP site. His-460 serves as a coordination point for L-aspartate. Residue Glu-497 participates in ATP binding. Arg-504 is a binding site for L-aspartate. Gly-549–Arg-552 serves as a coordination point for ATP.

This sequence belongs to the class-II aminoacyl-tRNA synthetase family. Type 1 subfamily. Homodimer.

It is found in the cytoplasm. It carries out the reaction tRNA(Asx) + L-aspartate + ATP = L-aspartyl-tRNA(Asx) + AMP + diphosphate. Its function is as follows. Aspartyl-tRNA synthetase with relaxed tRNA specificity since it is able to aspartylate not only its cognate tRNA(Asp) but also tRNA(Asn). Reaction proceeds in two steps: L-aspartate is first activated by ATP to form Asp-AMP and then transferred to the acceptor end of tRNA(Asp/Asn). In Prochlorococcus marinus (strain MIT 9515), this protein is Aspartate--tRNA(Asp/Asn) ligase.